A 320-amino-acid polypeptide reads, in one-letter code: Ferrochelatase (320 aa).

Fe cation contacts are provided by histidine 194 and glutamate 275.

It belongs to the ferrochelatase family. Monomer.

Its subcellular location is the cytoplasm. The catalysed reaction is heme b + 2 H(+) = protoporphyrin IX + Fe(2+). It participates in porphyrin-containing compound metabolism; protoheme biosynthesis; protoheme from protoporphyrin-IX: step 1/1. Catalyzes the ferrous insertion into protoporphyrin IX. This is Ferrochelatase from Escherichia coli O45:K1 (strain S88 / ExPEC).